A 398-amino-acid chain; its full sequence is tRNA(Ile)-lysidine synthase (398 aa).

25–30 (SGGVDS) serves as a coordination point for ATP.

This sequence belongs to the tRNA(Ile)-lysidine synthase family.

Its subcellular location is the cytoplasm. It carries out the reaction cytidine(34) in tRNA(Ile2) + L-lysine + ATP = lysidine(34) in tRNA(Ile2) + AMP + diphosphate + H(+). Functionally, ligates lysine onto the cytidine present at position 34 of the AUA codon-specific tRNA(Ile) that contains the anticodon CAU, in an ATP-dependent manner. Cytidine is converted to lysidine, thus changing the amino acid specificity of the tRNA from methionine to isoleucine. In Francisella tularensis subsp. novicida (strain U112), this protein is tRNA(Ile)-lysidine synthase.